The primary structure comprises 499 residues: U4/U6 small nuclear ribonucleoprotein Prp31 (499 aa).

Residues 1–43 (MSLADELLADLEEAAEEEEGGSYGEEEEEPAIEDVQEETQLDL) form a disordered region. Residues 7–40 (LLADLEEAAEEEEGGSYGEEEEEPAIEDVQEETQ) show a composition bias toward acidic residues. 2 coiled-coil regions span residues 85–120 (EAAP…KYSK) and 181–215 (DEEL…MSFI). The Nop domain occupies 215-333 (IAPNLSIIIG…IERKFDKWQE (119 aa)). Positions 334-357 (PPPVKQVKPLPAPLDGQRKKRGGR) are disordered. The Nuclear localization signal (NLS) motif lies at 351-364 (RKKRGGRRYRKMKE). 3 positions are modified to phosphoserine: Ser-379, Ser-395, and Ser-432. Lys-438 bears the N6-acetyllysine mark. Residue Ser-439 is modified to Phosphoserine. At Thr-440 the chain carries Phosphothreonine. Ser-450 carries the post-translational modification Phosphoserine. The residue at position 455 (Thr-455) is a Phosphothreonine. Residues Lys-471 and Lys-478 each participate in a glycyl lysine isopeptide (Lys-Gly) (interchain with G-Cter in SUMO2) cross-link.

This sequence belongs to the PRP31 family. Identified in the spliceosome B complex. Component of the U4/U6-U5 tri-snRNP complex composed of the U4, U6 and U5 snRNAs and at least PRPF3, PRPF4, PRPF6, PRPF8, PRPF31, SNRNP200, TXNL4A, SNRNP40, DDX23, CD2BP2, PPIH, SNU13, EFTUD2, SART1 and USP39. Interacts with a complex formed by SNU13 and U4 snRNA, but not with SNU13 or U4 snRNA alone. The complex formed by SNU13 and PRPF31 also binds U4atac snRNA, a characteristic component of specific, less abundant spliceosomal complexes. Interacts with PRPF6/U5 snRNP-associated 102 kDa protein. Component of some MLL1/MLL complex, at least composed of the core components KMT2A/MLL1, ASH2L, HCFC1/HCF1, WDR5 and RBBP5, as well as the facultative components BACC1, CHD8, E2F6, HSP70, INO80C, KANSL1, LAS1L, MAX, MCRS1, MGA, KAT8/MOF, PELP1, PHF20, PRP31, RING2, RUVB1/TIP49A, RUVB2/TIP49B, SENP3, TAF1, TAF4, TAF6, TAF7, TAF9 and TEX10. Interacts (via its NLS) with CTNNBL1. Interacts with USH1G. Post-translationally, phosphorylated by PRP4K during spliceosome assembly.

The protein resides in the nucleus. It localises to the nucleus speckle. It is found in the cajal body. Functionally, involved in pre-mRNA splicing as component of the spliceosome. Required for the assembly of the U4/U5/U6 tri-snRNP complex, one of the building blocks of the spliceosome. This chain is U4/U6 small nuclear ribonucleoprotein Prp31 (Prpf31), found in Mus musculus (Mouse).